We begin with the raw amino-acid sequence, 296 residues long: Fructose-bisphosphate aldolase class 1 (296 aa).

Glu175 functions as the Proton acceptor in the catalytic mechanism. The active-site Schiff-base intermediate with dihydroxyacetone-P is Lys212.

The protein belongs to the class I fructose-bisphosphate aldolase family.

It carries out the reaction beta-D-fructose 1,6-bisphosphate = D-glyceraldehyde 3-phosphate + dihydroxyacetone phosphate. The protein operates within carbohydrate degradation; glycolysis; D-glyceraldehyde 3-phosphate and glycerone phosphate from D-glucose: step 4/4. This Staphylococcus epidermidis (strain ATCC 35984 / DSM 28319 / BCRC 17069 / CCUG 31568 / BM 3577 / RP62A) protein is Fructose-bisphosphate aldolase class 1.